The sequence spans 510 residues: Beta-glucosidase 12 (510 aa).

An N-terminal signal peptide occupies residues 1–24 (MAAAGAMPGGLLLTFLLLAVVASG). Residue Gln-53 participates in a beta-D-glucoside binding. Asn-122 is a glycosylation site (N-linked (GlcNAc...) asparagine). A beta-D-glucoside is bound by residues His-157 and 202 to 203 (NE). Glu-203 functions as the Proton donor in the catalytic mechanism. 2 cysteine pairs are disulfide-bonded: Cys-208–Cys-243 and Cys-222–Cys-230. Asn-229 is a glycosylation site (N-linked (GlcNAc...) asparagine). Residue Tyr-346 coordinates a beta-D-glucoside. Residues Asn-361 and Asn-371 are each glycosylated (N-linked (GlcNAc...) asparagine). Residue Glu-417 coordinates a beta-D-glucoside. The active-site Nucleophile is Glu-417. A glycan (N-linked (GlcNAc...) asparagine) is linked at Asn-425. A beta-D-glucoside contacts are provided by residues Trp-466, 473 to 474 (EW), and Phe-482.

Belongs to the glycosyl hydrolase 1 family.

It localises to the secreted. It catalyses the reaction Hydrolysis of terminal, non-reducing beta-D-glucosyl residues with release of beta-D-glucose.. Functionally, hydrolyzes p-nitrophenyl beta-D-glucoside, p-nitrophenyl beta-D-galactoside, p-nitrophenyl beta-D-xyloside, p-nitrophenyl beta-D-fucoside, p-nitrophenyl beta-L-arabinoside, cello-oligosaccharides and laminaribiose. In Oryza sativa subsp. japonica (Rice), this protein is Beta-glucosidase 12.